The chain runs to 158 residues: U4/U6.U5 small nuclear ribonucleoprotein 27 kDa protein (158 aa).

The segment covering 1-30 (MGRSRSRTPPRRERRRSRSSSRDRERRRRE) has biased composition (basic residues). Residues 1–100 (MGRSRSRTPP…ISAEDMQGKT (100 aa)) are disordered. The span at 31 to 41 (RERSRSRDRDR) shows a compositional bias: basic and acidic residues. The segment covering 42-62 (RRSRSRSPHRRRSRSPRRHRS) has biased composition (basic residues). Over residues 69 to 86 (RQKDRRDDDRKDVKEKPA) the composition is skewed to basic and acidic residues.

Belongs to the SNUT3 family. As to quaternary structure, part of a tri-snRNP complex.

It is found in the nucleus. In terms of biological role, may play a role in mRNA splicing. The protein is U4/U6.U5 small nuclear ribonucleoprotein 27 kDa protein (snrnp27) of Danio rerio (Zebrafish).